The primary structure comprises 378 residues: Rhodopsin (378 aa).

The Extracellular segment spans residues 1-53 (MMSIASGPSHAAYTWTAQGGGFGNQTVVDKVPPEMLHLVDAHWYQFPPMNPLW). An N-linked (GlcNAc...) asparagine glycan is attached at Asn24. The chain crosses the membrane as a helical span at residues 54–78 (HAILGFVIGILGMISVIGNGMVIYI). At 79 to 90 (FTTTKSLRTPSN) the chain is on the cytoplasmic side. Residues 91–115 (LLVINLAISDFLMMLSMSPAMVINC) form a helical membrane-spanning segment. The Extracellular portion of the chain corresponds to 116–130 (YYETWVLGPLVCELY). Cys127 and Cys204 are disulfide-bonded. The chain crosses the membrane as a helical span at residues 131–150 (GLTGSLFGCGSIWTMTMIAF). The Cytoplasmic segment spans residues 151–169 (DRYNVIVKGLSAKPMTING). A helical transmembrane segment spans residues 170 to 193 (ALLRILGIWFFSLGWTIAPMFGWN). The Extracellular portion of the chain corresponds to 194 to 217 (RYVPEGNMTACGTDYLTKDLLSRS). N-linked (GlcNAc...) asparagine glycosylation occurs at Asn200. A helical membrane pass occupies residues 218–245 (YILVYSFFCYFLPLFLIIYSYFFIIQAV). Topologically, residues 246-280 (AAHEKNMREQAKKMNVASLRSAENQSTSAECKLAK) are cytoplasmic. Residues 281–304 (VALMTISLWFMAWTPYLVINYAGI) form a helical membrane-spanning segment. Residues 305–311 (FETVKIN) lie on the Extracellular side of the membrane. Residues 312 to 336 (PLFTIWGSLFAKANAVYNPIVYGIS) form a helical membrane-spanning segment. Lys323 is modified (N6-(retinylidene)lysine). Topologically, residues 337-378 (HPKYRAALFQRFPSLACSSGPAGADTLSTTTTVTEGTEKPAA) are cytoplasmic. The disordered stretch occupies residues 356–378 (GPAGADTLSTTTTVTEGTEKPAA). Low complexity predominate over residues 362–371 (TLSTTTTVTE).

Belongs to the G-protein coupled receptor 1 family. Opsin subfamily. In terms of processing, phosphorylated on some or all of the serine and threonine residues present in the C-terminal region.

Its subcellular location is the membrane. Visual pigments are the light-absorbing molecules that mediate vision. They consist of an apoprotein, opsin, covalently linked to cis-retinal. This chain is Rhodopsin, found in Cataglyphis bombycina (Saharan silver ant).